The sequence spans 104 residues: Urease subunit beta (104 aa).

This sequence belongs to the urease beta subunit family. Heterotrimer of UreA (gamma), UreB (beta) and UreC (alpha) subunits. Three heterotrimers associate to form the active enzyme.

It is found in the cytoplasm. It carries out the reaction urea + 2 H2O + H(+) = hydrogencarbonate + 2 NH4(+). The protein operates within nitrogen metabolism; urea degradation; CO(2) and NH(3) from urea (urease route): step 1/1. This Rhodococcus opacus (strain B4) protein is Urease subunit beta.